The primary structure comprises 938 residues: Protein NLP3 (938 aa).

Disordered stretches follow at residues 1–26 (MEVDPSSSLPGAGEGGGGGIGGGGGD) and 557–597 (LADD…KAEK). Residues 12 to 26 (AGEGGGGGIGGGGGD) show a composition bias toward gly residues. Residues 580-597 (SLHKSNKPPERRRGKAEK) are compositionally biased toward basic and acidic residues. The region spanning 585 to 666 (NKPPERRRGK…IESVQGSDAA (82 aa)) is the RWP-RK domain. Positions 640 to 662 (SRKINKVNRSLSKLKQVIESVQG) form a coiled coil. The tract at residues 743 to 769 (DKASHSRSSSGEGSINSRTSEASCHGS) is disordered. The span at 748–762 (SRSSSGEGSINSRTS) shows a compositional bias: low complexity. One can recognise a PB1 domain in the interval 847-926 (TVTIKASFKE…HVIRLLVSDV (80 aa)).

It localises to the nucleus. Functionally, probable transcription factor. The sequence is that of Protein NLP3 (NLP3) from Oryza sativa subsp. japonica (Rice).